The following is a 307-amino-acid chain: Probable thioesterase KK1J (307 aa).

Belongs to the AMT4 thioesterase family.

Its pathway is secondary metabolite biosynthesis. Its function is as follows. Probable thioesterase; part of the gene cluster that mediates the biosynthesis of KK-1, a novel cyclic depsipeptide with 10 residues which is a promising active compound with high activity against many plant pathogens, especially Botrytis cinerea. Within the pathway, kk1J is not essential for the biosynthesis of KK-1, but plays a role for efficient production via correction of peptide chain synthesis by kk1B. The nonribosomal peptide synthetase (NRPS) kk1B catalyzes the elongation and cyclization of the decapeptide chain composed of 1 D-lactic acid residue (D-Lac), 1 pipecolic acid residue (Pip), 1 aspartic acid residue (Asp), 1 isoleucine residue (Ile), 1 glycine residue (Gly), 1 tyrosine residue (Tyr) and 4 valine residues (Val). The Asp, Ile and 3 Val residues are N-methylated by the 5 methyltransferase domains from the NRPS (found in modules 3, 5, 6, 7 and 9), whereas the Tyr residue is O-methylated by the cluster encoded O-methyltransferase kk1A. The thioesterase kk1J is likely to be involved in the corrective mechanism of peptide chain synthesis. The D-lactate dehydrogenase kk1H is involved in the synthesis of D-lactic acid from pyruvic acid, which is recognized by the A domain of the first kk1B module. The pyrroline-5-carboxylate reductase kk1I is involved in the synthesis of the L-pipecolic acid residue of KK-1 from delta-1-pyrroline-5-carboxylate (P5C), a metabolic intermediate of lysine. It still is unclear how kk1C and kk1D are involved in the production of KK-1. The polypeptide is Probable thioesterase KK1J (Curvularia clavata).